A 505-amino-acid chain; its full sequence is Alpha-1-syntrophin (505 aa).

Disordered regions lie at residues 1–25 and 40–77; these read MASG…GAGG and LTVS…PPQL. 2 consecutive PH domains span residues 6–269 and 293–401; these read RAPR…AQVN and DIKQ…DGCH. One can recognise a PDZ domain in the interval 87–170; it reads RVTVRKADAG…EVVLEVKYMK (84 aa). 5 positions are modified to phosphoserine: S101, S184, S189, S193, and S200. The segment at 180 to 210 is disordered; that stretch reads TGGTSVGWDSPPASPLQRQPSSPGPTPRNFS. Residues 449-505 form the SU domain; sequence PFEKLQMSSDDGASLLFLDFGGAEGEIQLDLHSCPKTIVFIIHSFLSAKVTRLGLLA. Residues 483 to 505 are calmodulin-binding; the sequence is PKTIVFIIHSFLSAKVTRLGLLA.

The protein belongs to the syntrophin family. As to quaternary structure, monomer and homodimer. Interacts with the other members of the syntrophin family SNTB1 and SNTB2; SGCG and SGCA of the dystrophin glycoprotein complex; NOS1; GRB2; the sodium channel proteins SCN4A and SCN5A; F-actin and calmodulin. Interacts with dystrophin protein DMD and related proteins DTNA and UTRN and with MAPK12, TGFA and GA. Interacts with MYOC; regulates muscle hypertrophy. Interacts with DTNB. Phosphorylated by CaM-kinase II. Phosphorylation may inhibit the interaction with DMD. As to expression, high expression in skeletal muscle and heart. Low expression in brain, pancreas, liver, kidney and lung. Not detected in placenta.

Its subcellular location is the cell membrane. It localises to the sarcolemma. The protein localises to the cell junction. The protein resides in the cytoplasm. It is found in the cytoskeleton. Its function is as follows. Adapter protein that binds to and probably organizes the subcellular localization of a variety of membrane proteins. May link various receptors to the actin cytoskeleton and the extracellular matrix via the dystrophin glycoprotein complex. Plays an important role in synapse formation and in the organization of UTRN and acetylcholine receptors at the neuromuscular synapse. Binds to phosphatidylinositol 4,5-bisphosphate. This chain is Alpha-1-syntrophin (SNTA1), found in Homo sapiens (Human).